The following is an 866-amino-acid chain: Scm-like with four MBT domains protein 1 (866 aa).

MBT repeat units follow at residues 20 to 120 (LSWE…LEAP), 128 to 232 (SDWD…LQPP), 242 to 348 (AEWQ…ISPP), and 356 to 453 (FDWA…LSTP). An antigenic epitope region spans residues 34–42 (VPYGSFKHV). Positions 641–777 (KKKNKRIGRP…DDENKPPSPK (137 aa)) are disordered. The span at 663–682 (KASKRRKRRKNVFVHKKKRS) shows a compositional bias: basic residues. Over residues 683-694 (SASVDNTPAGSP) the composition is skewed to polar residues. Composition is skewed to acidic residues over residues 699 to 713 (GEDEDDPDEGDDDSL) and 721 to 730 (QQDELQEESE). Residues 737–749 (CSSSPTQSEISTS) are compositionally biased toward low complexity. Residues S767 and S775 each carry the phosphoserine modification. An SAM domain is found at 796–864 (WSVADVVRFI…RIKFAFYEQF (69 aa)).

As to quaternary structure, interacts with MYOD1. Component of the SLC (SFMBT1-LSD1-CoREST) corepressor complex, which also contains KDM1A/LSD1 and RCOR1/CoREST. Interacts with KDM1A/LSD1 and RCOR1/CoREST. Interacts with L3MBTL3. In terms of tissue distribution, expressed in all cell lines and normal tissues tested, including the thymus.

The protein resides in the nucleus. Its function is as follows. Histone-binding protein, which is part of various corepressor complexes. Mediates the recruitment of corepressor complexes to target genes, followed by chromatin compaction and repression of transcription. Plays a role during myogenesis: required for the maintenance of undifferentiated states of myogenic progenitor cells via interaction with MYOD1. Interaction with MYOD1 leads to the recruitment of associated corepressors and silencing of MYOD1 target genes. Part of the SLC complex in germ cells, where it may play a role during spermatogenesis. This is Scm-like with four MBT domains protein 1 (SFMBT1) from Homo sapiens (Human).